Consider the following 252-residue polypeptide: Transcription factor bHLH117 (252 aa).

Residues 103–141 are disordered; sequence LFPSLSPPLPAAKRQKLNSTSSSTTSGSPTASNDGGIIT. Positions 121–134 are enriched in low complexity; it reads STSSSTTSGSPTAS. In terms of domain architecture, bHLH spans 130–179; sequence SPTASNDGGIITKRRKISDKIRSLEKLMPWERKMNLAMTLEESHKYIKFL.

As to quaternary structure, homodimer.

Its subcellular location is the nucleus. This is Transcription factor bHLH117 (BHLH117) from Arabidopsis thaliana (Mouse-ear cress).